We begin with the raw amino-acid sequence, 306 residues long: Glutathione transport system permease protein GsiC (306 aa).

Residues 1–8 lie on the Cytoplasmic side of the membrane; that stretch reads MLNYVIKR. A helical membrane pass occupies residues 9–29; the sequence is LLGLIPTLFIVSVLVFLFVHM. Residues 30 to 102 lie on the Periplasmic side of the membrane; the sequence is LPGDPARLIA…SRFMPTLWLT (73 aa). In terms of domain architecture, ABC transmembrane type-1 spans 95 to 292; sequence FMPTLWLTIT…LEFILINLVV (198 aa). A helical membrane pass occupies residues 103-123; sequence ITSMVWAVIFGMAAGIIAAVW. At 124–134 the chain is on the cytoplasmic side; sequence RNRWPDRLSMT. Residues 135–155 form a helical membrane-spanning segment; that stretch reads IAVSGISFPAFALGMFLIQVF. The Periplasmic portion of the chain corresponds to 156–168; sequence SVELGWLPTVGAD. A helical transmembrane segment spans residues 169–189; sequence SWQHYILPSLTLGAAVAAVMA. The Cytoplasmic portion of the chain corresponds to 190–228; that stretch reads RFTRASFVDVLSEDYMRTARAKGVSETWVVLKHGLRNAM. The chain crosses the membrane as a helical span at residues 229-249; sequence IPVVTMMGLQFGFLLGGSIVV. Over 250-277 the chain is Periplasmic; sequence EKVFNWPGLGRLLVDSVEMRDYPVIQAE. A helical transmembrane segment spans residues 278 to 298; that stretch reads ILLFSLEFILINLVVDVLYAA. The Cytoplasmic portion of the chain corresponds to 299–306; the sequence is INPAIRYK.

The protein belongs to the binding-protein-dependent transport system permease family. In terms of assembly, the complex is composed of two ATP-binding proteins (GsiA), two transmembrane proteins (GsiC and GsiD) and a solute-binding protein (GsiB).

The protein resides in the cell inner membrane. Its function is as follows. Part of the ABC transporter complex GsiABCD involved in glutathione import. Probably responsible for the translocation of the substrate across the membrane. The sequence is that of Glutathione transport system permease protein GsiC from Shigella flexneri serotype 5b (strain 8401).